Here is a 577-residue protein sequence, read N- to C-terminus: Putative laccase-1 (577 aa).

The N-terminal stretch at 1–28 is a signal peptide; that stretch reads MGTAKIPALLWFLLAGLVLALAVNPAHG. 2 consecutive Plastocyanin-like domains span residues 37 to 153 and 163 to 316; these read FITE…PKRG and KEIP…YTDS. Residues Asn-42 and Asn-83 are each glycosylated (N-linked (GlcNAc...) asparagine). Residues His-87 and His-89 each coordinate Cu cation. N-linked (GlcNAc...) asparagine glycosylation is present at Asn-115. Positions 132 and 134 each coordinate Cu cation. N-linked (GlcNAc...) asparagine glycosylation is found at Asn-276, Asn-304, Asn-382, and Asn-402. Positions 442–561 constitute a Plastocyanin-like 3 domain; sequence DINGGGPLLT…DTMFIVKDGK (120 aa). Positions 478, 481, 483, 540, 541, 542, 546, and 551 each coordinate Cu cation.

This sequence belongs to the multicopper oxidase family. It depends on Cu cation as a cofactor.

It localises to the secreted. The protein localises to the extracellular space. It is found in the apoplast. The enzyme catalyses 4 hydroquinone + O2 = 4 benzosemiquinone + 2 H2O. In terms of biological role, lignin degradation and detoxification of lignin-derived products. In Oryza sativa subsp. japonica (Rice), this protein is Putative laccase-1 (LAC1).